The chain runs to 271 residues: Ribosomal RNA small subunit methyltransferase A (271 aa).

S-adenosyl-L-methionine is bound by residues Asn28, Leu30, Gly54, Glu75, Asp99, and Asn117.

Belongs to the class I-like SAM-binding methyltransferase superfamily. rRNA adenine N(6)-methyltransferase family. RsmA subfamily.

The protein localises to the cytoplasm. It catalyses the reaction adenosine(1518)/adenosine(1519) in 16S rRNA + 4 S-adenosyl-L-methionine = N(6)-dimethyladenosine(1518)/N(6)-dimethyladenosine(1519) in 16S rRNA + 4 S-adenosyl-L-homocysteine + 4 H(+). Functionally, specifically dimethylates two adjacent adenosines (A1518 and A1519) in the loop of a conserved hairpin near the 3'-end of 16S rRNA in the 30S particle. May play a critical role in biogenesis of 30S subunits. This Thermus thermophilus (strain ATCC 27634 / DSM 579 / HB8) protein is Ribosomal RNA small subunit methyltransferase A.